The chain runs to 653 residues: Brain-enriched guanylate kinase-associated protein (653 aa).

At Tyr186 the chain carries Phosphotyrosine. Positions Pro241–Tyr271 are disordered. The span at Ser243–Ser252 shows a compositional bias: polar residues. Phosphoserine occurs at positions 249, 278, 295, and 314. The disordered stretch occupies residues Arg288–Gly329. The segment covering Thr315–Glu327 has biased composition (acidic residues). A phosphoserine mark is found at Ser400 and Ser427. At Arg435 the chain carries Asymmetric dimethylarginine. Residues Ser523, Ser533, Ser535, Ser558, Ser560, Ser564, Ser613, and Ser623 each carry the phosphoserine modification. Residues Gly587–Asn653 are disordered.

In terms of assembly, interacts with DLG4 and DLGAP1 and forms a ternary complex.

It localises to the cytoplasm. The protein resides in the membrane. In terms of biological role, may sustain the structure of the postsynaptic density (PSD). The protein is Brain-enriched guanylate kinase-associated protein (BEGAIN) of Ovis aries (Sheep).